Consider the following 111-residue polypeptide: Disintegrin piscivostatin-alpha (111 aa).

Residues 1–20 (MIQVLLVTICLAVFPYQGSS) form the signal peptide. A propeptide spanning residues 21–44 (IILESGNVNDYEVVYPRKITPLPK) is cleaved from the precursor. In terms of domain architecture, Disintegrin spans 45 to 111 (GAVQPKNPCC…GDCPRKHFYA (67 aa)). 4 disulfides stabilise this stretch: Cys-53-Cys-76, Cys-67-Cys-73, Cys-72-Cys-97, and Cys-85-Cys-104. Positions 89–91 (RGD) match the Cell attachment site motif. Positions 110 to 111 (YA) are excised as a propeptide.

Belongs to the disintegrin family. Dimeric disintegrin subfamily. As to quaternary structure, heterodimer with piscivostatin-beta; disulfide-linked. In terms of tissue distribution, expressed by the venom gland.

The protein resides in the secreted. Inhibits fibrinogen interaction with platelets. Acts by binding to alpha-IIb/beta-3 (ITGA2B/ITGB3) on the platelet surface and inhibits both ADP-induced platelet aggregation and platelet aggregate dissociation in human platelet-rich plasma. The protein is Disintegrin piscivostatin-alpha of Agkistrodon piscivorus piscivorus (Eastern cottonmouth).